The primary structure comprises 128 residues: Protein ripply2 (128 aa).

Residues 1 to 64 (MDTTESAESA…ALPSGPGMAE (64 aa)) form a disordered region. The segment covering 17–28 (PSRSRCPPSAQP) has biased composition (low complexity). Positions 34 to 37 (WRPW) match the WRPW motif motif. The tract at residues 74–109 (HPVRLFWPKSKCYDYLYQEAETLLKNFPIQATISFY) is ripply homology domain.

This sequence belongs to the ripply family. Expressed in the embryonic anterior presomitic mesoderm. First expressed in S-I at 8.5 dpc, where expression is maintained until 13.5 dpc, with an additional stripe of expression sometimes seen in the rostral part of S0 and S-I.

The protein resides in the nucleus. Functionally, plays a role in somitogenesis. Required for somite segregation and establishment of rostrocaudal polarity in somites. The chain is Protein ripply2 from Mus musculus (Mouse).